Consider the following 761-residue polypeptide: Phosphoribosylformylglycinamidine synthase subunit PurL (761 aa).

Histidine 58 is a catalytic residue. ATP is bound by residues tyrosine 61 and lysine 105. Glutamate 107 contributes to the Mg(2+) binding site. Substrate-binding positions include 108 to 111 and arginine 130; that span reads SHNH. The active-site Proton acceptor is histidine 109. Mg(2+) is bound at residue aspartate 131. Residue glutamine 259 coordinates substrate. Position 287 (aspartate 287) interacts with Mg(2+). 331-333 contributes to the substrate binding site; it reads ESQ. Positions 519 and 556 each coordinate ATP. Asparagine 557 is a binding site for Mg(2+). Serine 559 contributes to the substrate binding site.

The protein belongs to the FGAMS family. As to quaternary structure, monomer. Part of the FGAM synthase complex composed of 1 PurL, 1 PurQ and 2 PurS subunits.

It is found in the cytoplasm. It catalyses the reaction N(2)-formyl-N(1)-(5-phospho-beta-D-ribosyl)glycinamide + L-glutamine + ATP + H2O = 2-formamido-N(1)-(5-O-phospho-beta-D-ribosyl)acetamidine + L-glutamate + ADP + phosphate + H(+). It participates in purine metabolism; IMP biosynthesis via de novo pathway; 5-amino-1-(5-phospho-D-ribosyl)imidazole from N(2)-formyl-N(1)-(5-phospho-D-ribosyl)glycinamide: step 1/2. Part of the phosphoribosylformylglycinamidine synthase complex involved in the purines biosynthetic pathway. Catalyzes the ATP-dependent conversion of formylglycinamide ribonucleotide (FGAR) and glutamine to yield formylglycinamidine ribonucleotide (FGAM) and glutamate. The FGAM synthase complex is composed of three subunits. PurQ produces an ammonia molecule by converting glutamine to glutamate. PurL transfers the ammonia molecule to FGAR to form FGAM in an ATP-dependent manner. PurS interacts with PurQ and PurL and is thought to assist in the transfer of the ammonia molecule from PurQ to PurL. The protein is Phosphoribosylformylglycinamidine synthase subunit PurL of Rhodococcus jostii (strain RHA1).